The sequence spans 528 residues: Chromosomal replication initiator protein DnaA (528 aa).

The segment at 1–104 is domain I, interacts with DnaA modulators; it reads MNDDPNALAR…PVDDEPESEA (104 aa). The disordered stretch occupies residues 93-159; that stretch reads AAPVDDEPES…DFEEVDDDSE (67 aa). The segment covering 104–123 has biased composition (basic and acidic residues); it reads APSRERRPDPEPVHTPRHLE. Residues 105–187 form a domain II region; the sequence is PSRERRPDPE…GPAPAATGGN (83 aa). Residues 149–159 are compositionally biased toward acidic residues; that stretch reads TDFEEVDDDSE. A domain III, AAA+ region region spans residues 188–404; sequence SLNAKYTFDT…GALIRVTAFA (217 aa). ATP contacts are provided by glycine 232, glycine 234, lysine 235, and threonine 236. The interval 405-528 is domain IV, binds dsDNA; it reads SLNRQPLDLT…TARIKQRSKR (124 aa).

This sequence belongs to the DnaA family. In terms of assembly, oligomerizes as a right-handed, spiral filament on DNA at oriC.

It is found in the cytoplasm. Plays an essential role in the initiation and regulation of chromosomal replication. ATP-DnaA binds to the origin of replication (oriC) to initiate formation of the DNA replication initiation complex once per cell cycle. Binds the DnaA box (a 9 base pair repeat at the origin) and separates the double-stranded (ds)DNA. Forms a right-handed helical filament on oriC DNA; dsDNA binds to the exterior of the filament while single-stranded (ss)DNA is stabiized in the filament's interior. The ATP-DnaA-oriC complex binds and stabilizes one strand of the AT-rich DNA unwinding element (DUE), permitting loading of DNA polymerase. After initiation quickly degrades to an ADP-DnaA complex that is not apt for DNA replication. Binds acidic phospholipids. The sequence is that of Chromosomal replication initiator protein DnaA from Rhodococcus opacus (strain B4).